A 259-amino-acid polypeptide reads, in one-letter code: Sugar fermentation stimulation protein homolog (259 aa).

This sequence belongs to the SfsA family.

This is Sugar fermentation stimulation protein homolog from Prochlorococcus marinus (strain MIT 9303).